We begin with the raw amino-acid sequence, 1181 residues long: Cellulose synthase-like protein D5 (1181 aa).

The span at Met-1–Val-17 shows a compositional bias: polar residues. Disordered stretches follow at residues Met-1–Arg-70 and Lys-202–Met-229. Over residues Ser-48–Ser-59 the composition is skewed to low complexity. The segment covering Asp-210–Glu-222 has biased composition (acidic residues). The next 2 helical transmembrane spans lie at Ala-312–Leu-332 and Ala-343–Leu-363. The active site involves Asp-443. Residues Val-497 to Glu-542 are a coiled coil. Asp-884 is an active-site residue. Transmembrane regions (helical) follow at residues Leu-966 to Val-986, Ile-991 to Glu-1011, Pro-1038 to Leu-1058, Phe-1082 to Leu-1102, Leu-1116 to Gly-1136, and Thr-1146 to Ile-1166.

This sequence belongs to the glycosyltransferase 2 family. Plant cellulose synthase-like D subfamily. In terms of tissue distribution, expressed in vascular tissues.

Its subcellular location is the golgi apparatus membrane. Functionally, involved in stem and root growth. Possesses xylan and homogalacturonan synthase activity. This is Cellulose synthase-like protein D5 (CSLD5) from Arabidopsis thaliana (Mouse-ear cress).